The sequence spans 688 residues: Sodium channel and clathrin linker 1 (688 aa).

Ala-2 carries the N-acetylalanine modification. Positions 59–673 (LIAEYEKHLE…SASQQLSVIT (615 aa)) form a coiled coil. Phosphoserine is present on Ser-681.

In terms of assembly, interacts with SCN10A and clathrin. Identified in a complex containing SCN10A, clathrin and SCLT1. As to expression, detected in small neurons in dorsal root ganglia. Detected in C-type fibers of sciatic nerve (at protein level).

The protein resides in the cytoplasm. It is found in the cytoskeleton. It localises to the microtubule organizing center. Its subcellular location is the centrosome. The protein localises to the centriole. Its function is as follows. Adapter protein that links SCN10A to clathrin. Regulates SCN10A channel activity, possibly by promoting channel internalization. The protein is Sodium channel and clathrin linker 1 (Sclt1) of Rattus norvegicus (Rat).